A 230-amino-acid polypeptide reads, in one-letter code: Ribosomal RNA small subunit methyltransferase G (230 aa).

S-adenosyl-L-methionine contacts are provided by residues glycine 91, leucine 96, 142-143 (VE), and arginine 161.

Belongs to the methyltransferase superfamily. RNA methyltransferase RsmG family.

It is found in the cytoplasm. It carries out the reaction guanosine(527) in 16S rRNA + S-adenosyl-L-methionine = N(7)-methylguanosine(527) in 16S rRNA + S-adenosyl-L-homocysteine. Its function is as follows. Specifically methylates the N7 position of guanine in position 527 of 16S rRNA. This Burkholderia pseudomallei (strain K96243) protein is Ribosomal RNA small subunit methyltransferase G.